Reading from the N-terminus, the 175-residue chain is Peptide deformylase (175 aa).

Residues cysteine 94 and histidine 136 each contribute to the Fe cation site. Glutamate 137 is an active-site residue. Histidine 140 lines the Fe cation pocket.

Belongs to the polypeptide deformylase family. Requires Fe(2+) as cofactor.

It carries out the reaction N-terminal N-formyl-L-methionyl-[peptide] + H2O = N-terminal L-methionyl-[peptide] + formate. Removes the formyl group from the N-terminal Met of newly synthesized proteins. Requires at least a dipeptide for an efficient rate of reaction. N-terminal L-methionine is a prerequisite for activity but the enzyme has broad specificity at other positions. In Brucella suis biovar 1 (strain 1330), this protein is Peptide deformylase.